The chain runs to 413 residues: Bestrophin homolog 13 (413 aa).

Transmembrane regions (helical) follow at residues 29–49 (LIYL…IDLI), 72–92 (SYTR…NVVA), 236–256 (LVYT…TLFG), and 272–292 (LVVP…FKVG).

The protein belongs to the anion channel-forming bestrophin (TC 1.A.46) family. Calcium-sensitive chloride channel subfamily. As to quaternary structure, forms oligomers.

It is found in the cell membrane. Functionally, forms chloride channels. The protein is Bestrophin homolog 13 (best-13) of Caenorhabditis elegans.